A 651-amino-acid polypeptide reads, in one-letter code: p-hydroxybenzoic acid efflux pump subunit AaeB (651 aa).

11 consecutive transmembrane segments (helical) span residues Phe-11–Leu-31, Ala-41–Ile-61, Leu-67–Ile-87, Val-91–Val-111, Phe-119–Leu-139, Glu-150–Ile-170, Leu-368–Val-388, Phe-405–Pro-425, Gln-429–Val-449, Gly-455–Phe-475, and Leu-481–Ile-501.

This sequence belongs to the aromatic acid exporter ArAE (TC 2.A.85) family.

It localises to the cell inner membrane. Forms an efflux pump with AaeA. Could function as a metabolic relief valve, allowing to eliminate certain compounds when they accumulate to high levels in the cell. The protein is p-hydroxybenzoic acid efflux pump subunit AaeB of Yersinia pseudotuberculosis serotype O:1b (strain IP 31758).